Consider the following 77-residue polypeptide: Small ribosomal subunit protein bS20 (77 aa).

It belongs to the bacterial ribosomal protein bS20 family.

In terms of biological role, binds directly to 16S ribosomal RNA. The chain is Small ribosomal subunit protein bS20 from Streptococcus agalactiae serotype Ia (strain ATCC 27591 / A909 / CDC SS700).